Consider the following 207-residue polypeptide: Proteasome subunit beta 1 (207 aa).

A propeptide spans 1 to 9 (MWALDKIKG) (removed in mature form; by autocatalysis). Residue Thr-10 is the Nucleophile of the active site.

It belongs to the peptidase T1B family. As to quaternary structure, the 20S proteasome core is composed of 14 alpha and 14 beta subunits that assemble into four stacked heptameric rings, resulting in a barrel-shaped structure. The two inner rings, each composed of seven catalytic beta subunits, are sandwiched by two outer rings, each composed of seven alpha subunits. The catalytic chamber with the active sites is on the inside of the barrel. Has a gated structure, the ends of the cylinder being occluded by the N-termini of the alpha-subunits. Is capped at one or both ends by the proteasome regulatory ATPase, PAN.

It is found in the cytoplasm. It carries out the reaction Cleavage of peptide bonds with very broad specificity.. Its activity is regulated as follows. The formation of the proteasomal ATPase PAN-20S proteasome complex, via the docking of the C-termini of PAN into the intersubunit pockets in the alpha-rings, triggers opening of the gate for substrate entry. Interconversion between the open-gate and close-gate conformations leads to a dynamic regulation of the 20S proteasome proteolysis activity. Component of the proteasome core, a large protease complex with broad specificity involved in protein degradation. This Thermococcus sibiricus (strain DSM 12597 / MM 739) protein is Proteasome subunit beta 1.